The primary structure comprises 825 residues: Probable inorganic carbon transporter subunit DabA (825 aa).

Zn(2+)-binding residues include C346, D348, H516, and C531.

It belongs to the inorganic carbon transporter (TC 9.A.2) DabA family. In terms of assembly, forms a complex with DabB. Zn(2+) serves as cofactor.

The protein resides in the cell inner membrane. Functionally, part of an energy-coupled inorganic carbon pump. This Paracidovorax citrulli (strain AAC00-1) (Acidovorax citrulli) protein is Probable inorganic carbon transporter subunit DabA.